Here is a 375-residue protein sequence, read N- to C-terminus: Protein RIC-3 (375 aa).

Positions 1–29 (MALSAVQKVVLFSCLVLCVSLLLPRAYIA) are cleaved as a signal peptide. Over 30 to 90 (RGKPAAQEGN…GGGGGTRPSL (61 aa)) the chain is Lumenal. A compositionally biased stretch (polar residues) spans 38 to 47 (GNTGLFQSSG). The tract at residues 38–63 (GNTGLFQSSGHHPKPTDGRPGGAHFP) is disordered. A helical membrane pass occupies residues 91–111 (VGQIIPIYGFGILLYILYILF). The Cytoplasmic portion of the chain corresponds to 112–375 (KLSSKGKSTK…RKRNTKGIEY (264 aa)). Residues 135-165 (KRKITDYELSQLQDKLKETEEAMEKIISRLG) are a coiled coil. The tract at residues 251–375 (SAEQVAEQMG…RKRNTKGIEY (125 aa)) is disordered. Positions 286-296 (GDQQAQGTISA) are enriched in polar residues. A compositionally biased stretch (acidic residues) spans 305–319 (EDIEEDEDEDEDPEV). Basic residues predominate over residues 365 to 375 (LRKRNTKGIEY).

This sequence belongs to the ric-3 family.

The protein resides in the endoplasmic reticulum membrane. Molecular chaperone which facilitates proper subunit assembly andsurface trafficking of alpha-7 (CHRNA7) and alpha-8 (CHRNA8) nicotinic acetylcholine receptors. May also promote functional expression of homomeric serotoninergic 5-HT3 receptors, and of heteromeric acetylcholine receptors. The chain is Protein RIC-3 (ric3) from Xenopus tropicalis (Western clawed frog).